Reading from the N-terminus, the 623-residue chain is Putative chaperone protein ClpB2, chloroplastic (623 aa).

One can recognise a Clp R domain in the interval 1-123 (MNDLKFDPNV…KSEVEKLRGE (123 aa)). Repeat stretches follow at residues 6-71 (FDPN…NQSL) and 77-123 (RNLG…LRGE). The tract at residues 129 to 375 (LKTYGTDLVE…HVKAQLDIQP (247 aa)) is i. 172-179 (GEPGVGKT) contacts ATP. A coiled-coil region spans residues 368–462 (KAQLDIQPEE…LQEAERQHDV (95 aa)). 571–578 (GPTGVGKT) serves as a coordination point for ATP.

It belongs to the ClpA/ClpB family.

The chain is Putative chaperone protein ClpB2, chloroplastic (CLPB2) from Arabidopsis thaliana (Mouse-ear cress).